The chain runs to 478 residues: Monocarboxylate transporter 2 (478 aa).

At 1–15 (MPPMPSAPPVHPPPD) the chain is on the cytoplasmic side. The chain crosses the membrane as a helical span at residues 16-36 (GGWGWIVVGAAFISIGFSYAF). Topologically, residues 37–59 (PKAVTVFFKEIQQIFHTTYSEIA) are extracellular. Residues 60-80 (WISSIMLAVMYAGGPVSSVLV) form a helical membrane-spanning segment. At 81 to 89 (NKYGSRPVV) the chain is on the cytoplasmic side. A helical membrane pass occupies residues 90–110 (IAGGLLCCLGMVLASFSSSVV). Residues 111–115 (QLYLT) are Extracellular-facing. Residues 116-136 (MGFITGLGLAFNLQPALTIIG) form a helical membrane-spanning segment. Residues 137–148 (KYFYRKRPMANG) lie on the Cytoplasmic side of the membrane. Residues 149–169 (LAMAGSPVFLSSLAPFNQYLF) traverse the membrane as a helical segment. The Extracellular portion of the chain corresponds to 170–173 (NTFG). A helical transmembrane segment spans residues 174–194 (WKGSFLILGSLLLNACVAGSL). Residues 195–246 (MRPLGPNQTTSKSKNKTGKTEDDSSPKKIKTKKSTWEKVNKYLDFSLFKHRG) are Cytoplasmic-facing. The disordered stretch occupies residues 200-224 (PNQTTSKSKNKTGKTEDDSSPKKIK). A helical membrane pass occupies residues 247 to 267 (FLIYLSGNVIMFLGFFAPIIF). Over 268-282 (LAPYAKDQGIDEYSA) the chain is Extracellular. Residues 283-303 (AFLLSVMAFVDMFARPSVGLI) traverse the membrane as a helical segment. Residues 304–312 (ANSKYIRPR) are Cytoplasmic-facing. A helical membrane pass occupies residues 313–333 (IQYFFSFAIMFNGVCHLLCPL). Residues 334 to 338 (AQDYT) are Extracellular-facing. Residues 339–359 (SLVLYAVFFGLGFGSVSSVLF) traverse the membrane as a helical segment. Topologically, residues 360–373 (ETLMDLVGAPRFSS) are cytoplasmic. Residues 374–394 (AVGLVTIVECGPVLLGPPLAG) traverse the membrane as a helical segment. The Extracellular portion of the chain corresponds to 395–406 (KLVDLTGEYKYM). The chain crosses the membrane as a helical span at residues 407–427 (YMSCGAIVVAASVWLLIGNAI). At 428–478 (NYRLLAKERKEENARQKTRESEPLSKSKHSEDVNVKVSNAQSVTSERETNI) the chain is on the cytoplasmic side. Over residues 437 to 461 (KEENARQKTRESEPLSKSKHSEDVN) the composition is skewed to basic and acidic residues. The disordered stretch occupies residues 437–478 (KEENARQKTRESEPLSKSKHSEDVNVKVSNAQSVTSERETNI).

Belongs to the major facilitator superfamily. Monocarboxylate porter (TC 2.A.1.13) family. Homodimer. Interacts with GRID2IP. Interacts with EMB; interaction mediates SLC16A7 targeting to the plasma membrane. Interacts with isoform 2 of BSG. Detected in heart and in blood lymphocytes and monocytes (at protein level). High expression in testis, moderate to low in spleen, heart, kidney, pancreas, skeletal muscle, brain and leukocyte. Restricted expression in normal tissues, but widely expressed in cancer cells.

It localises to the cell membrane. The protein localises to the basolateral cell membrane. It is found in the cytoplasm. It carries out the reaction pyruvate(out) + H(+)(out) = pyruvate(in) + H(+)(in). The enzyme catalyses 3-methyl-2-oxobutanoate(out) + H(+)(out) = 3-methyl-2-oxobutanoate(in) + H(+)(in). The catalysed reaction is (S)-lactate(in) + H(+)(in) = (S)-lactate(out) + H(+)(out). It catalyses the reaction acetoacetate(out) + H(+)(out) = acetoacetate(in) + H(+)(in). It carries out the reaction (R)-3-hydroxybutanoate(out) + H(+)(out) = (R)-3-hydroxybutanoate(in) + H(+)(in). The enzyme catalyses 4-methyl-2-oxopentanoate(out) + H(+)(out) = 4-methyl-2-oxopentanoate(in) + H(+)(in). The catalysed reaction is (S)-3-hydroxybutanoate(out) + H(+)(out) = (S)-3-hydroxybutanoate(in) + H(+)(in). With respect to regulation, transport activity exhibits steep dependence on substrate concentration. Substrate concentration sensitivity of SLC16A7 arises from the strong inter-subunit cooperativity of the SLC16A7 dimer during transport. Inhibited by AR-C155858. Proton-coupled monocarboxylate symporter. Catalyzes the rapid transport across the plasma membrane of monocarboxylates such as L-lactate, pyruvate and ketone bodies, acetoacetate, beta-hydroxybutyrate and acetate. Dimerization is functionally required and both subunits work cooperatively in transporting substrate. The chain is Monocarboxylate transporter 2 from Homo sapiens (Human).